The primary structure comprises 36 residues: Thrombin-like enzyme TLP (36 aa).

The 36-residue stretch at 1-36 folds into the Peptidase S1 domain; it reads IGGFECNEHEHRSLVYLYNSAGFFCAGTLLNHEWVV.

The protein belongs to the peptidase S1 family. Snake venom subfamily. Monomer. Expressed by the venom gland.

The protein resides in the secreted. Functionally, thrombin-like snake venom serine protease. Shows strong hydrolytic activity towards Boc-Asp(oBzl)-Pro-Arg-MCA, a synthetic substrate for thrombin. The sequence is that of Thrombin-like enzyme TLP from Naja naja (Indian cobra).